The following is a 314-amino-acid chain: 2,3-dihydroxyphenylpropionate/2,3-dihydroxicinnamic acid 1,2-dioxygenase (314 aa).

His115 acts as the Proton donor in catalysis. The active-site Proton acceptor is the His179.

The protein belongs to the LigB/MhpB extradiol dioxygenase family. As to quaternary structure, homotetramer. Fe(2+) is required as a cofactor.

The enzyme catalyses 3-(2,3-dihydroxyphenyl)propanoate + O2 = (2Z,4E)-2-hydroxy-6-oxonona-2,4-dienedioate + H(+). The catalysed reaction is (2E)-3-(2,3-dihydroxyphenyl)prop-2-enoate + O2 = (2Z,4E,7E)-2-hydroxy-6-oxonona-2,4,7-trienedioate + H(+). It functions in the pathway aromatic compound metabolism; 3-phenylpropanoate degradation. Catalyzes the non-heme iron(II)-dependent oxidative cleavage of 2,3-dihydroxyphenylpropionic acid and 2,3-dihydroxicinnamic acid into 2-hydroxy-6-ketononadienedioate and 2-hydroxy-6-ketononatrienedioate, respectively. The polypeptide is 2,3-dihydroxyphenylpropionate/2,3-dihydroxicinnamic acid 1,2-dioxygenase (Klebsiella pneumoniae subsp. pneumoniae (strain ATCC 700721 / MGH 78578)).